Here is a 410-residue protein sequence, read N- to C-terminus: Chitin deacetylase 3 (410 aa).

The N-terminal stretch at 1 to 18 (MYGHLSLSTLSLLAVVAA) is a signal peptide. Residues 19–39 (APFPESWLQPRDSDVSQLFRR) constitute a propeptide that is removed on maturation. 2 N-linked (GlcNAc...) asparagine glycosylation sites follow: asparagine 61 and asparagine 80. A NodB homology domain is found at 124 to 314 (KVWALSFDDG…KAVANGWSVK (191 aa)). The Proton acceptor role is filled by aspartate 131. Aspartate 131 provides a ligand contact to acetate. Aspartate 132 contributes to the Co(2+) binding site. Residue asparagine 149 is glycosylated (N-linked (GlcNAc...) asparagine). Histidine 183 and histidine 187 together coordinate Co(2+). Acetate is bound at residue tyrosine 225. N-linked (GlcNAc...) asparagine glycosylation occurs at asparagine 279. The Proton donor role is filled by histidine 289. N-linked (GlcNAc...) asparagine glycosylation occurs at asparagine 293. Serine 385 carries the GPI-anchor amidated serine lipid modification. Positions 386–410 (SSWPIANRPSLFVIACGLALAAIMV) are cleaved as a propeptide — removed in mature form.

Belongs to the polysaccharide deacetylase family. Requires Co(2+) as cofactor.

Its subcellular location is the cell membrane. It catalyses the reaction [(1-&gt;4)-N-acetyl-beta-D-glucosaminyl](n) + n H2O = chitosan + n acetate. Its function is as follows. Hydrolyzes the N-acetamido groups of N-acetyl-D-glucosamine residues in chitin to form chitosan and acetate. Chitosan is required to anchor melanin to the cell wall, for maintenance of cell wall integrity, and for proper cytokinesis. Chitosan offers an advantage during infection as it is less readily detected than chitin by host immunosurveillance mechanisms. This chain is Chitin deacetylase 3, found in Cryptococcus neoformans var. neoformans serotype D (strain JEC21 / ATCC MYA-565) (Filobasidiella neoformans).